A 241-amino-acid chain; its full sequence is Lipopolysaccharide export system ATP-binding protein LptB (241 aa).

The region spanning 5–237 is the ABC transporter domain; it reads LQAQSLFKSY…PMVRQVYLGD (233 aa). Residue 37-44 coordinates ATP; that stretch reads GPNGAGKT.

Belongs to the ABC transporter superfamily. Outer membrane lipopolysaccharide export (TC 1.B.42) family. As to quaternary structure, component of the lipopolysaccharide transport and assembly complex. The LptBFG transporter is composed of two ATP-binding proteins (LptB) and two transmembrane proteins (LptF and LptG).

Its subcellular location is the cytoplasm. The protein resides in the cell inner membrane. Its function is as follows. Part of the ABC transporter complex LptBFG involved in the translocation of lipopolysaccharide (LPS) from the inner membrane to the outer membrane. Probably responsible for energy coupling to the transport system. This is Lipopolysaccharide export system ATP-binding protein LptB (lptB) from Acidithiobacillus ferridurans.